Here is a 252-residue protein sequence, read N- to C-terminus: MIKKRIIPCLDVKDGRVVKGIQFKGLRDIGNPVDFALYYNEQGADELVFLDISRTEAGHDLVLDVISETAEKLFIPLTVGGGISTIDDISQLLNHGADKVSLNSSALKNPSFIKEASEKFGRQCICIAIDSNYDSELNDYFCYTHGGKQRTDKRVYDWVQEVEALGAGELLITSMTHDGMKQGFDVSHLHEIEKLVNIPVIASGGGGNPEHFVDLFKETNVSAGLAASILHDKETTVNQIKSSMKRGGIPVR.

Catalysis depends on residues aspartate 11 and aspartate 130.

Belongs to the HisA/HisF family. As to quaternary structure, heterodimer of HisH and HisF.

The protein resides in the cytoplasm. The catalysed reaction is 5-[(5-phospho-1-deoxy-D-ribulos-1-ylimino)methylamino]-1-(5-phospho-beta-D-ribosyl)imidazole-4-carboxamide + L-glutamine = D-erythro-1-(imidazol-4-yl)glycerol 3-phosphate + 5-amino-1-(5-phospho-beta-D-ribosyl)imidazole-4-carboxamide + L-glutamate + H(+). It participates in amino-acid biosynthesis; L-histidine biosynthesis; L-histidine from 5-phospho-alpha-D-ribose 1-diphosphate: step 5/9. In terms of biological role, IGPS catalyzes the conversion of PRFAR and glutamine to IGP, AICAR and glutamate. The HisF subunit catalyzes the cyclization activity that produces IGP and AICAR from PRFAR using the ammonia provided by the HisH subunit. In Staphylococcus saprophyticus subsp. saprophyticus (strain ATCC 15305 / DSM 20229 / NCIMB 8711 / NCTC 7292 / S-41), this protein is Imidazole glycerol phosphate synthase subunit HisF.